The chain runs to 230 residues: 5'-methylthioadenosine/S-adenosylhomocysteine nucleosidase (230 aa).

The active-site Proton acceptor is E12. Substrate contacts are provided by residues G78, M153, and 174-175 (ME). The active-site Proton donor is the D198.

The protein belongs to the PNP/UDP phosphorylase family. MtnN subfamily.

It catalyses the reaction S-adenosyl-L-homocysteine + H2O = S-(5-deoxy-D-ribos-5-yl)-L-homocysteine + adenine. It carries out the reaction S-methyl-5'-thioadenosine + H2O = 5-(methylsulfanyl)-D-ribose + adenine. The catalysed reaction is 5'-deoxyadenosine + H2O = 5-deoxy-D-ribose + adenine. Its pathway is amino-acid biosynthesis; L-methionine biosynthesis via salvage pathway; S-methyl-5-thio-alpha-D-ribose 1-phosphate from S-methyl-5'-thioadenosine (hydrolase route): step 1/2. Catalyzes the irreversible cleavage of the glycosidic bond in both 5'-methylthioadenosine (MTA) and S-adenosylhomocysteine (SAH/AdoHcy) to adenine and the corresponding thioribose, 5'-methylthioribose and S-ribosylhomocysteine, respectively. Also cleaves 5'-deoxyadenosine, a toxic by-product of radical S-adenosylmethionine (SAM) enzymes, into 5-deoxyribose and adenine. This chain is 5'-methylthioadenosine/S-adenosylhomocysteine nucleosidase, found in Tolumonas auensis (strain DSM 9187 / NBRC 110442 / TA 4).